A 642-amino-acid polypeptide reads, in one-letter code: Chaperone protein HtpG (642 aa).

Positions 1 to 348 (MSTKIEQLEF…AQDLSLNVSR (348 aa)) are a; substrate-binding. The b stretch occupies residues 349 to 564 (EILQQDRQIR…AFSMSPALER (216 aa)). A c region spans residues 565–642 (MYRASGQPVP…MLANRLARTV (78 aa)).

This sequence belongs to the heat shock protein 90 family. As to quaternary structure, homodimer.

The protein resides in the cytoplasm. Molecular chaperone. Has ATPase activity. The protein is Chaperone protein HtpG of Rhodococcus jostii (strain RHA1).